Here is a 112-residue protein sequence, read N- to C-terminus: CENP-A recruiting complex protein mis19 (112 aa).

Component of the CENP-A recruiting complex composed of at least mis16, mis19, mis19 and mis20.

It localises to the chromosome. The protein resides in the centromere. The protein localises to the kinetochore. Its function is as follows. Component of the CENP-A recruiting complex that ensures the integrity of mitotic spindles through maintenance of kinetochore factors mis6/CENP-I and cnp1/CENP-A. Links mis16 and mis18 to recruit CENP-A through interacting with non-sense-mediated mRNA decay (NMD) factors and the SWI/SNF complex. Also links mis18 with the CCAN/mis6/ctf19 complex to promote CENP-A assembly. The polypeptide is CENP-A recruiting complex protein mis19 (Schizosaccharomyces pombe (strain 972 / ATCC 24843) (Fission yeast)).